The primary structure comprises 308 residues: tRNA dimethylallyltransferase (308 aa).

Residue Gly16–Thr23 coordinates ATP. Thr18–Thr23 provides a ligand contact to substrate. An interaction with substrate tRNA region spans residues Asp41–Gln44.

Belongs to the IPP transferase family. As to quaternary structure, monomer. It depends on Mg(2+) as a cofactor.

It catalyses the reaction adenosine(37) in tRNA + dimethylallyl diphosphate = N(6)-dimethylallyladenosine(37) in tRNA + diphosphate. Catalyzes the transfer of a dimethylallyl group onto the adenine at position 37 in tRNAs that read codons beginning with uridine, leading to the formation of N6-(dimethylallyl)adenosine (i(6)A). In Myxococcus xanthus (strain DK1622), this protein is tRNA dimethylallyltransferase.